Reading from the N-terminus, the 1387-residue chain is Magnesium-chelatase subunit ChlH, chloroplastic (1387 aa).

The N-terminal 50 residues, 1–50 (MSSLVSTPFTTATGVQKKLGAPVPLHSFLLSRRQPAAGAGRGRAAAAAIR), are a transit peptide targeting the chloroplast.

The protein belongs to the Mg-chelatase subunit H family. The magnesium chelatase complex is a heterotrimer consisting of subunits CHLI, CHLD and CHLH.

Its subcellular location is the plastid. It localises to the chloroplast stroma. The protein resides in the chloroplast membrane. It catalyses the reaction protoporphyrin IX + Mg(2+) + ATP + H2O = Mg-protoporphyrin IX + ADP + phosphate + 3 H(+). The protein operates within porphyrin-containing compound metabolism; chlorophyll biosynthesis. Its function is as follows. Involved in chlorophyll biosynthesis. Catalyzes the insertion of magnesium ion into protoporphyrin IX to yield Mg-protoporphyrin IX. The reaction takes place in two steps, with an ATP-dependent activation followed by an ATP-dependent chelation step. May be involved in the plastid-to-nucleus retrograde signaling. The polypeptide is Magnesium-chelatase subunit ChlH, chloroplastic (CHLH) (Oryza sativa subsp. indica (Rice)).